Here is a 336-residue protein sequence, read N- to C-terminus: MKSAKKLLSVLCLGIFILTFTACDMVEKTPEAKAKSTIAKVNGEKIQRKDLDESPNMQQVLSQIKTQYGEEFEKTEQGKEVIKEQKKQILENLITEKVLLQKGKELKVIPKDEELNKEADKKVNEIKAVYNNDEKKFEETLKSTGFTKETLKEYLKDQIVIEKVINEVTKDVKVEDKDAQKYYNENQSMFTEKPNTMNVSHILVKTEDEAKKVKKRLDAKEDFAKVAKEVSQDTGSKEKGGLLGDISYSDSNYDPTFMKAAIALKSGEISNPVHTQWGYHIIKINSKKEYPVKKFDSVKEDIKKQLKQEKQQEAYTKKIEEWKKASKIKTYEKNLL.

Residues 1–22 form the signal peptide; that stretch reads MKSAKKLLSVLCLGIFILTFTA. A lipid anchor (N-palmitoyl cysteine) is attached at Cys-23. The S-diacylglycerol cysteine moiety is linked to residue Cys-23. The PpiC domain occupies 194-286; that stretch reads PNTMNVSHIL…WGYHIIKINS (93 aa).

This sequence belongs to the PrsA family.

Its subcellular location is the cell membrane. The catalysed reaction is [protein]-peptidylproline (omega=180) = [protein]-peptidylproline (omega=0). Plays a major role in protein secretion by helping the post-translocational extracellular folding of several secreted proteins. In Clostridium botulinum (strain Langeland / NCTC 10281 / Type F), this protein is Foldase protein PrsA.